A 464-amino-acid polypeptide reads, in one-letter code: GTPase Der (464 aa).

EngA-type G domains are found at residues Pro-3 to Ser-166 and Leu-177 to Thr-350. Residues Gly-9–Ser-16, Asp-56–Ile-60, Asn-118–Asp-121, Gly-183–Ser-190, Asp-230–Val-234, and Asn-295–Asp-298 each bind GTP. The region spanning Glu-351–Asp-435 is the KH-like domain.

The protein belongs to the TRAFAC class TrmE-Era-EngA-EngB-Septin-like GTPase superfamily. EngA (Der) GTPase family. Associates with the 50S ribosomal subunit.

Functionally, GTPase that plays an essential role in the late steps of ribosome biogenesis. This is GTPase Der from Teredinibacter turnerae (strain ATCC 39867 / T7901).